We begin with the raw amino-acid sequence, 152 residues long: Deoxyuridine 5'-triphosphate nucleotidohydrolase (152 aa).

Substrate contacts are provided by residues 71-73 (RSG), Asn-84, 88-90 (LVD), and Met-98.

The protein belongs to the dUTPase family. Mg(2+) serves as cofactor.

The enzyme catalyses dUTP + H2O = dUMP + diphosphate + H(+). The protein operates within pyrimidine metabolism; dUMP biosynthesis; dUMP from dCTP (dUTP route): step 2/2. This enzyme is involved in nucleotide metabolism: it produces dUMP, the immediate precursor of thymidine nucleotides and it decreases the intracellular concentration of dUTP so that uracil cannot be incorporated into DNA. The chain is Deoxyuridine 5'-triphosphate nucleotidohydrolase from Shewanella oneidensis (strain ATCC 700550 / JCM 31522 / CIP 106686 / LMG 19005 / NCIMB 14063 / MR-1).